Reading from the N-terminus, the 1049-residue chain is Multidrug efflux pump subunit AcrB (1049 aa).

The Cytoplasmic portion of the chain corresponds to 1–9; the sequence is MPNFFIDRP. A helical transmembrane segment spans residues 10 to 28; that stretch reads IFAWVIAIIIMLAGGLAIL. Residues 29–336 lie on the Periplasmic side of the membrane; it reads KLPVAQYPTI…YDTTPFVKIS (308 aa). Residues 337–356 traverse the membrane as a helical segment; the sequence is IHEVVKTLVEAIILVFLVMY. The Cytoplasmic portion of the chain corresponds to 357 to 365; that stretch reads LFLQNFRAT. A helical membrane pass occupies residues 366 to 385; it reads LIPTIAVPVVLLGTFAVLAA. Residues 386–391 are Periplasmic-facing; the sequence is FGFSIN. A helical transmembrane segment spans residues 392–413; sequence TLTMFGMVLAIGLLVDDAIVVV. Residues 414 to 438 are Cytoplasmic-facing; sequence ENVERVMAEEGLPPKEATRKSMGQI. Residues 439–457 traverse the membrane as a helical segment; the sequence is QGALVGIAMVLSAVFVPMA. Over 458–465 the chain is Periplasmic; sequence FFGGSTGA. A helical membrane pass occupies residues 466-490; sequence IYRQFSITIVSAMALSVLVALILTP. Topologically, residues 491-538 are cytoplasmic; sequence ALCATMLKPIAKGDHGEGKKGFFGWFNRMFEKSTHHYTDSVGGILRST. Residues 539 to 555 traverse the membrane as a helical segment; sequence GRYLVLYLIIVVGMAYL. Over 556-871 the chain is Periplasmic; it reads FVRLPSSFLP…MSYQERLSGN (316 aa). A helical transmembrane segment spans residues 872-888; sequence QAPSLYAISLIVVFLCL. Over 889 to 898 the chain is Cytoplasmic; that stretch reads AALYESWSIP. The chain crosses the membrane as a helical span at residues 899–918; the sequence is FSVMLVVPLGVIGALLAATF. The Periplasmic segment spans residues 919–924; sequence RGLTND. A helical transmembrane segment spans residues 925 to 943; the sequence is VYFQVGLLTTIGLSAKNAI. Topologically, residues 944–972 are cytoplasmic; it reads LIVEFAKDLMDKEGKGLIEATLDAVRMRL. A helical membrane pass occupies residues 973–992; the sequence is RPILMTSLAFILGVMPLVIS. Residues 993-998 lie on the Periplasmic side of the membrane; sequence TGAGSG. Residues 999–1018 traverse the membrane as a helical segment; it reads AQNAVGTGVMGGMVTATVLA. Residues 1019–1049 lie on the Cytoplasmic side of the membrane; that stretch reads IFFVPVFFVVVRRRFSRKNEDIEHSHTVDHH.

It belongs to the resistance-nodulation-cell division (RND) (TC 2.A.6) family. In terms of assembly, homotrimer, with large domains that extend into the periplasm, interacts with AcrA and TolC. AcrA may be required to stably link this protein and TolC. Interacts with AcrZ. Part of the AcrA-AcrB-AcrZ-TolC efflux pump.

It localises to the cell inner membrane. In terms of biological role, acrA-AcrB-AcrZ-TolC is a drug efflux protein complex with broad substrate specificity that uses the proton motive force to export substrates. Functionally, (Microbial infection) Involved in contact-dependent growth inhibition (CDI), acts downstream of BamA, the receptor for CDI. Its role in CDI is independent of the AcrA-AcrB-TolC efflux pump complex. This is Multidrug efflux pump subunit AcrB (acrB) from Escherichia coli (strain K12).